Here is a 418-residue protein sequence, read N- to C-terminus: AP-3 complex subunit mu-1 (418 aa).

The MHD domain maps to 176–417 (NNEAYFDVVE…VTKAGKFQVR (242 aa)).

This sequence belongs to the adaptor complexes medium subunit family. Adaptor protein complex 3 (AP-3) is a heterotetramer composed of two large adaptins (delta-type subunit AP3D1 and beta-type subunit AP3B1 or AP3B2), a medium adaptin (mu-type subunit AP3M1 or AP3M2) and a small adaptin (sigma-type subunit APS1 or AP3S2). Interacts with AGAP1. AP-3 associates with the BLOC-1 complex. In terms of assembly, (Microbial infection) Interacts with human respiratory virus (HRSV) matrix protein; this interaction plays an essential role in trafficking the matrix protein in host cells.

The protein resides in the golgi apparatus. It localises to the cytoplasmic vesicle membrane. Its function is as follows. Part of the AP-3 complex, an adaptor-related complex which is not clathrin-associated. The complex is associated with the Golgi region as well as more peripheral structures. It facilitates the budding of vesicles from the Golgi membrane and may be directly involved in trafficking to lysosomes. In concert with the BLOC-1 complex, AP-3 is required to target cargos into vesicles assembled at cell bodies for delivery into neurites and nerve terminals. The chain is AP-3 complex subunit mu-1 (AP3M1) from Homo sapiens (Human).